A 538-amino-acid polypeptide reads, in one-letter code: DALR anticodon-binding domain-containing protein 3 (538 aa).

In terms of assembly, part of a complex containing tRNA(Arg) and METTL2. Interacts with tRNA(Arg)(CCU) and tRNA(Arg)(UCU). Interacts with METTL2.

Its function is as follows. Involved in tRNA methylation. Facilitates the recognition and targeting of tRNA(Arg)(CCU) and tRNA(Arg)(UCU) substrates for N(3)-methylcytidine modification by METTL2. In Rattus norvegicus (Rat), this protein is DALR anticodon-binding domain-containing protein 3 (Dalrd3).